A 492-amino-acid polypeptide reads, in one-letter code: Probable cytochrome P450 513A3 (492 aa).

A helical transmembrane segment spans residues 1–21 (MTSLTLYLIIFSIILYLFVNR). Cys-437 is a binding site for heme.

Belongs to the cytochrome P450 family. Heme is required as a cofactor.

It localises to the membrane. In Dictyostelium discoideum (Social amoeba), this protein is Probable cytochrome P450 513A3 (cyp513A3).